The primary structure comprises 100 residues: MQLTPREVEKLMVYTLADVALKRKQRGVKLNYPEAVSIITVTAMEGARDGKTVEEVMNEARSVLTRDDVMDGVVELIPNVQVEAIFTDGSRLVTVHDPIQ.

It belongs to the urease gamma subunit family. In terms of assembly, heterotrimer of UreA (gamma), UreB (beta) and UreC (alpha) subunits. Three heterotrimers associate to form the active enzyme.

It is found in the cytoplasm. It catalyses the reaction urea + 2 H2O + H(+) = hydrogencarbonate + 2 NH4(+). The protein operates within nitrogen metabolism; urea degradation; CO(2) and NH(3) from urea (urease route): step 1/1. The protein is Urease subunit gamma of Edwardsiella ictaluri (strain 93-146).